Consider the following 154-residue polypeptide: Myoglobin (154 aa).

Residues 2–148 enclose the Globin domain; sequence GLSDGEWQLV…FRNDMAAKYK (147 aa). Phosphoserine is present on serine 4. Position 65 (histidine 65) interacts with nitrite. Residue histidine 65 coordinates O2. Position 68 is a phosphothreonine (threonine 68). Heme b is bound at residue histidine 94.

It belongs to the globin family. As to quaternary structure, monomeric.

It is found in the cytoplasm. The protein resides in the sarcoplasm. It catalyses the reaction Fe(III)-heme b-[protein] + nitric oxide + H2O = Fe(II)-heme b-[protein] + nitrite + 2 H(+). The catalysed reaction is H2O2 + AH2 = A + 2 H2O. Its function is as follows. Monomeric heme protein which primary function is to store oxygen and facilitate its diffusion within muscle tissues. Reversibly binds oxygen through a pentacoordinated heme iron and enables its timely and efficient release as needed during periods of heightened demand. Depending on the oxidative conditions of tissues and cells, and in addition to its ability to bind oxygen, it also has a nitrite reductase activity whereby it regulates the production of bioactive nitric oxide. Under stress conditions, like hypoxia and anoxia, it also protects cells against reactive oxygen species thanks to its pseudoperoxidase activity. The polypeptide is Myoglobin (MB) (Macaca fascicularis (Crab-eating macaque)).